Here is a 249-residue protein sequence, read N- to C-terminus: Probable transcriptional regulatory protein Sfum_0996 (249 aa).

This sequence belongs to the TACO1 family.

The protein resides in the cytoplasm. The sequence is that of Probable transcriptional regulatory protein Sfum_0996 from Syntrophobacter fumaroxidans (strain DSM 10017 / MPOB).